The following is a 310-amino-acid chain: Ribosomal RNA small subunit methyltransferase H (310 aa).

Residues 32 to 34, Asp52, Phe79, Asp100, and Gln107 each bind S-adenosyl-L-methionine; that span reads GGH.

It belongs to the methyltransferase superfamily. RsmH family.

The protein resides in the cytoplasm. It carries out the reaction cytidine(1402) in 16S rRNA + S-adenosyl-L-methionine = N(4)-methylcytidine(1402) in 16S rRNA + S-adenosyl-L-homocysteine + H(+). Specifically methylates the N4 position of cytidine in position 1402 (C1402) of 16S rRNA. The protein is Ribosomal RNA small subunit methyltransferase H of Bacillus cereus (strain B4264).